The primary structure comprises 309 residues: tRNA uridine(34) hydroxylase (309 aa).

The 96-residue stretch at 130-225 folds into the Rhodanese domain; that stretch reads RGEEVVFFDG…YGEKYGNDGL (96 aa). Cysteine 185 serves as the catalytic Cysteine persulfide intermediate.

This sequence belongs to the TrhO family.

The enzyme catalyses uridine(34) in tRNA + AH2 + O2 = 5-hydroxyuridine(34) in tRNA + A + H2O. Catalyzes oxygen-dependent 5-hydroxyuridine (ho5U) modification at position 34 in tRNAs. The sequence is that of tRNA uridine(34) hydroxylase from Corynebacterium aurimucosum (strain ATCC 700975 / DSM 44827 / CIP 107346 / CN-1) (Corynebacterium nigricans).